Consider the following 142-residue polypeptide: uncharacterized protein (142 aa).

It belongs to the IIV-6 115R family.

This is an uncharacterized protein from Invertebrate iridescent virus 3 (IIV-3).